Consider the following 295-residue polypeptide: Succinate dehydrogenase [ubiquinone] iron-sulfur subunit, mitochondrial (295 aa).

The 2Fe-2S ferredoxin-type domain maps to 67–144; sequence EKPRLQSYTL…DTKIYPLPHM (78 aa). [2Fe-2S] cluster-binding residues include C106, C111, C114, and C126. Residues 185–215 form the 4Fe-4S ferredoxin-type domain; that stretch reads ERRRLDGLYECILCACCSTSCPSYWWNQDEY. C195, C198, and C201 together coordinate [4Fe-4S] cluster. C205 contacts [3Fe-4S] cluster. A ubiquinone is bound at residue W210. The [3Fe-4S] cluster site is built by C252 and C258. [4Fe-4S] cluster is bound at residue C262.

This sequence belongs to the succinate dehydrogenase/fumarate reductase iron-sulfur protein family. Component of complex II composed of four subunits: a flavoprotein (FP), an iron-sulfur protein (IP), and a cytochrome b composed of a large and a small subunit. Requires [2Fe-2S] cluster as cofactor. [3Fe-4S] cluster serves as cofactor. The cofactor is [4Fe-4S] cluster.

The protein localises to the mitochondrion inner membrane. The catalysed reaction is a quinone + succinate = fumarate + a quinol. Its pathway is carbohydrate metabolism; tricarboxylic acid cycle; fumarate from succinate (eukaryal route): step 1/1. Its function is as follows. Iron-sulfur protein (IP) subunit of succinate dehydrogenase (SDH) that is involved in complex II of the mitochondrial electron transport chain and is responsible for transferring electrons from succinate to ubiquinone (coenzyme Q). The sequence is that of Succinate dehydrogenase [ubiquinone] iron-sulfur subunit, mitochondrial (SDH2) from Mycosarcoma maydis (Corn smut fungus).